The chain runs to 697 residues: MFS antiporter QDR3 (697 aa).

The Cytoplasmic portion of the chain corresponds to 1–141 (MSHSPNLSPQ…ARDYPNKIKY (141 aa)). A disordered region spans residues 38 to 109 (HPIGHHGREQ…KPTSTSIKTN (72 aa)). 2 stretches are compositionally biased toward low complexity: residues 53–69 (NTTK…HTTT) and 85–99 (DLSS…YLSQ). The helical transmembrane segment at 142 to 162 (LIVFIIAFASLAGPFGTSVML) threads the bilayer. Residues 163 to 180 (PAIDDIVNDLNTNVSTVN) lie on the Extracellular side of the membrane. N175 and N180 each carry an N-linked (GlcNAc...) asparagine glycan. A helical transmembrane segment spans residues 181-201 (VSVGIYLLSLGIFPLWWSSFS). At 202–215 (ERFGRRSVYMVSFT) the chain is on the cytoplasmic side. A helical membrane pass occupies residues 216–236 (LFVAFSIGTALSPNIAALIVL). Topologically, residues 237–240 (RVLQ) are extracellular. The chain crosses the membrane as a helical span at residues 241 to 261 (GGSSASVQAVGAGTIADLFIP). The Cytoplasmic segment spans residues 262 to 268 (QERGQAM). The helical transmembrane segment at 269–289 (GLYYLGPLAGPFLAPILGGAV) threads the bilayer. The Extracellular portion of the chain corresponds to 290–296 (SQAWGWR). A helical transmembrane segment spans residues 297 to 317 (ATQWLLMIISACSFVLITFFL). Residues 318–485 (PETLRRVDTI…SIILLKHPPV (168 aa)) lie on the Cytoplasmic side of the membrane. The segment at 338 to 367 (DNNGSQNEKIHDDFAGADNSSVHDIDGNPI) is disordered. A helical transmembrane segment spans residues 486-506 (VLVISFSAISFAAIYFFNMAI). Residues 507-519 (SYEYARSPYNFSS) are Extracellular-facing. A glycan (N-linked (GlcNAc...) asparagine) is linked at N516. The helical transmembrane segment at 520 to 540 (VILGLMYIPNSVTYFMASIIG) threads the bilayer. The Cytoplasmic segment spans residues 541-565 (GKWNDRLLNRYAQKHGELVPESRLS). A helical membrane pass occupies residues 566-586 (WNIVVAIILYPMACLIFGWTI). Residues 587 to 590 (KYRE) are Extracellular-facing. A helical membrane pass occupies residues 591-611 (FWVIPLIGTALFGFASMLVIG). Over 612–626 (ATVTYLVDSLPGKGA) the chain is Cytoplasmic. A helical membrane pass occupies residues 627–647 (TGVALNNLIRQILAAIATFIV). Residues 648-653 (EPLLRA) lie on the Extracellular side of the membrane. Residues 654–674 (IGAGVLFSIIAGILLVSSLVL) form a helical membrane-spanning segment. Topologically, residues 675–697 (LYLKKRGAFFREHYDVMDLYAKL) are cytoplasmic.

Belongs to the major facilitator superfamily. CAR1 family.

Its subcellular location is the cell membrane. In terms of biological role, MFS antiporter that does not display functional linkage as drug transporter and performs functions that significantly affect biofilm development and virulence. No substrate for transport has been identified yet, but plays an important role in the growth in the host. In Candida albicans (strain SC5314 / ATCC MYA-2876) (Yeast), this protein is MFS antiporter QDR3 (QDR3).